The sequence spans 440 residues: MFLAQEIIRKKRDGHALSDEEIRFFINGIRDNTISEGQIAALAMTIFFHDMTMPERVSLTMAMRDSGTVLDWKSLHLNGPIVDKHSTGGVGDVTSLMLGPMVAACGGYIPMISGRGLGHTGGTLDKLESIPGFDIFPDDNRFREIIKDVGVAIIGQTSSLAPADKRFYATRDITATVDSIPLITASILAKKLAEGLDALVMDVKVGSGAFMPTYELSEALAEAIVGVANGAGVRTTALLTDMNQVLASSAGNAVEVREAVQFLTGEYRNPRLFDVTMALCVEMLISGKLAKDDAEARAKLQAVLDNGKAAEVFGRMVAAQKGPTDFVENYAKYLPTAMLTKAVYADTEGFVSEMDTRALGMAVVAMGGGRRQASDTIDYSVGFTDMARLGDQVDGQRPLAVIHAKDENSWQEASKAVKAAIKLADKAPESTPTVYRRISE.

This sequence belongs to the thymidine/pyrimidine-nucleoside phosphorylase family. In terms of assembly, homodimer.

The catalysed reaction is thymidine + phosphate = 2-deoxy-alpha-D-ribose 1-phosphate + thymine. It participates in pyrimidine metabolism; dTMP biosynthesis via salvage pathway; dTMP from thymine: step 1/2. The enzymes which catalyze the reversible phosphorolysis of pyrimidine nucleosides are involved in the degradation of these compounds and in their utilization as carbon and energy sources, or in the rescue of pyrimidine bases for nucleotide synthesis. In Shigella dysenteriae serotype 1 (strain Sd197), this protein is Thymidine phosphorylase.